We begin with the raw amino-acid sequence, 331 residues long: Type 2 lactosamine alpha-2,3-sialyltransferase (331 aa).

At 1 to 4 (MKGY) the chain is on the cytoplasmic side. A helical; Signal-anchor for type II membrane protein membrane pass occupies residues 5–25 (VVAIFLSSIFLYYVLYCILWG). Residues 26–331 (TNGYWFPNEE…KKMVINLTQN (306 aa)) lie on the Lumenal side of the membrane. Residues asparagine 129, asparagine 181, asparagine 295, asparagine 308, and asparagine 327 are each glycosylated (N-linked (GlcNAc...) asparagine).

This sequence belongs to the glycosyltransferase 29 family.

It is found in the golgi apparatus membrane. The catalysed reaction is a neolactoside nLc4Cer(d18:1(4E)) + CMP-N-acetyl-beta-neuraminate = a neolactoside IV(3)-alpha-NeuAc-nLc4Cer(d18:1(4E)) + CMP + H(+). The enzyme catalyses a beta-D-galactosyl-(1-&gt;4)-N-acetyl-beta-D-glucosaminyl derivative + CMP-N-acetyl-beta-neuraminate = an N-acetyl-alpha-neuraminyl-(2-&gt;3)-beta-D-galactosyl-(1-&gt;4)-N-acetyl-beta-D-glucosaminyl derivative + CMP + H(+). It catalyses the reaction a neolactoside nLc6Cer(d18:1(4E)) + CMP-N-acetyl-beta-neuraminate = a neolactoside VI(3)-alpha-NeuNAc-nLc6Cer(d18:1(4E)) + CMP + H(+). Transfers the sialyl residue from CMP-N-acetyl-beta-neuraminate to the terminal galactose residue on sugar chains of glycoproteins and glycolipids. It's alpha-2,3-sialyltransferase activity is specific toward type II glycan chains (Galbeta1-4GlcNAc) on glycoproteins and glycolipids such as neolactosides nLc4Cer and nLc6Cer, whose sialyl-products serve as precursors for the Lewis X antigen. Critically involved in the synthesis of functional selectin ligands needed for neutrophil recruitment during inflammation and lymphocyte homing to the lymph nodes. The chain is Type 2 lactosamine alpha-2,3-sialyltransferase (St3gal6) from Rattus norvegicus (Rat).